The following is a 541-amino-acid chain: Glucose-6-phosphate isomerase (541 aa).

Glutamate 346 functions as the Proton donor in the catalytic mechanism. Catalysis depends on residues histidine 377 and lysine 506.

Belongs to the GPI family.

The protein localises to the cytoplasm. It carries out the reaction alpha-D-glucose 6-phosphate = beta-D-fructose 6-phosphate. Its pathway is carbohydrate biosynthesis; gluconeogenesis. The protein operates within carbohydrate degradation; glycolysis; D-glyceraldehyde 3-phosphate and glycerone phosphate from D-glucose: step 2/4. Functionally, catalyzes the reversible isomerization of glucose-6-phosphate to fructose-6-phosphate. The polypeptide is Glucose-6-phosphate isomerase (Rhizobium etli (strain ATCC 51251 / DSM 11541 / JCM 21823 / NBRC 15573 / CFN 42)).